The sequence spans 815 residues: (-)-kolavenyl diphosphate synthase TPS14, chloroplastic (815 aa).

Residues 1 to 51 (MFMSSSSSSHARRPQLSSFSYLHPPLPFPGLSFFNTRDKRVNFDSTRIICI) constitute a chloroplast transit peptide. Lysine 247 contacts substrate. Aspartate 379 and aspartate 381 together coordinate Mg(2+). A DXDD motif motif is present at residues 379–382 (DIDD). Lysine 465 is a binding site for substrate.

Belongs to the terpene synthase family. Tpsc subfamily. Mg(2+) serves as cofactor.

It is found in the plastid. The protein localises to the chloroplast. It carries out the reaction (2E,6E,10E)-geranylgeranyl diphosphate = (-)-kolavenyl diphosphate. Its activity is regulated as follows. Inhibited by high concentrations of magnesium. Diterpene synthase that catalyzes the formation of (-)-kolavenyl diphosphate from geranylgeranyl diphosphate (GGPP). This Tripterygium wilfordii (Thunder God vine) protein is (-)-kolavenyl diphosphate synthase TPS14, chloroplastic.